The primary structure comprises 584 residues: MNNHIEALSYYLGAFVDELARLNVCDVVISPGSRSTPLALLMEQHEQIKTYLHVDERSAAFFALGMAKAKKQPVAILCTSGTAAANYYPAVCEAYHARVPLLVLTADRPHELRDVGAPQAMNQFNLYGSFVKQFMEMALPEAREPMYQYVRMAAGRAVASASFAPMGPVHMNFPLREPLIPDFSLDGLWEQGCGEYTNRVQQGSMTLTSEYIRSLIKRLSRLEKGLIVCGDDSHLELVEVIAEFAEKTGYPVLADPLSNLRTGSHNQTMIIDCYDTFLRNELLKDTWKPDIIIRFGGMPVSKALTQYIKKQESAVHIIVDESGKWRDPALMTTEVVSASDVAFCKAMTEHMQKREQNDWFKKWKHINDKTKETLREVEAYDTAFEGKVITDIVRILPEGATLFVSNSMPIRDADTFLFTNEKKIHVMANRGVNGIDGIISTALGASTVCEPLVLVIGDLSFYHDLNGLLAAKLHDLNITIVVVNNDGGGIFSFLPQYESKEHFESLFGTPLGLDYEHVVKMYGGSFVRVSGWEAFREEVQKGIIERGLHVVEICTNREENVQLHRKLWAKSVIEIKDMLQGDTE.

It belongs to the TPP enzyme family. MenD subfamily. Homodimer. It depends on Mg(2+) as a cofactor. The cofactor is Mn(2+). Requires thiamine diphosphate as cofactor.

The enzyme catalyses isochorismate + 2-oxoglutarate + H(+) = 5-enolpyruvoyl-6-hydroxy-2-succinyl-cyclohex-3-ene-1-carboxylate + CO2. It functions in the pathway quinol/quinone metabolism; 1,4-dihydroxy-2-naphthoate biosynthesis; 1,4-dihydroxy-2-naphthoate from chorismate: step 2/7. It participates in quinol/quinone metabolism; menaquinone biosynthesis. Functionally, catalyzes the thiamine diphosphate-dependent decarboxylation of 2-oxoglutarate and the subsequent addition of the resulting succinic semialdehyde-thiamine pyrophosphate anion to isochorismate to yield 2-succinyl-5-enolpyruvyl-6-hydroxy-3-cyclohexene-1-carboxylate (SEPHCHC). This chain is 2-succinyl-5-enolpyruvyl-6-hydroxy-3-cyclohexene-1-carboxylate synthase, found in Bacillus cytotoxicus (strain DSM 22905 / CIP 110041 / 391-98 / NVH 391-98).